The sequence spans 859 residues: MYILVWKKGQQIKTFHTLDEAAQFKAASNIDEAQMFSVTVAPAISASGGSNEATNLRRLMYLSKSTNPEECNPQFLAEMARVATIRNREIGVSGFLMYSSPFSFQVIEGTDEDLDFLFAKISADPRHERCIVLANGPCTGRMYGDWHMKDSHMDSITTHPAMKTILYQIARSFSSMWSYLPKSAGNMLLLGKDPAAQPPEPMSVVVTFIYLVEFGSILSNPNLTDQAAEVLSTFVDVCVKNVEGSGGNIAKFITGICMAYWPINRTEEALTAIQQISEDLAQLRSQQAPGSAVSLMYSQAGVHYGRPMLCNAGRRKSDFTLLGDCINTTSRIATLAKKFKTPLLFSQEVRCLLRDEMREEIVGAGMHQVKGRDKPVVVYQFPGPELDVEMVRQKIEQFTPGRFRCQMPVVEYEGLPNSQRPPIFDDTPKANRRPRTPGYGGRQRSDSQVDRPIMIAKLAGPSVSATGDTTLTTLTYISQATRPMSRQDLSAIMRTATRRNAQQSITGTLLHVNGLFVQTLEGPKDAVANLYLRVRQDPRQTDVTTVHMAPLQERVYPSEWTLTSATAEMLATFPPLQDVLAQLAKSFTSLETYVPSTVVRHLTAGNNPRNLMPVSCGVVMLATDICSFTSLTEKSSLTEVWMICNTFIDACTSAICQDGREVIKLIGDCVTAYSPGNNADSAVAAAQELFTFCRQLREAFVDVLDVRGCVSCGVGLEYGQVVMAQCGSMGLTEYVVAGAVSARVMEVEAITREVGYAIVVTEPVADRLSPQLRDHGIVPTPQAIEGLPCYGIAGEEFELDVDSIKRGIKALHAARSGEKPLTEPEAAKPDFRVSPGRVRHGDSGRRSNSAQGKRSIQVR.

A BLUF 1 domain is found at L56–K149. A Guanylate cyclase 1 domain is found at V205–A333. The disordered stretch occupies residues G414–V449. The 93-residue stretch at L471–T563 folds into the BLUF 2 domain. One can recognise a Guanylate cyclase 2 domain in the interval V619 to E748. The tract at residues A813–R859 is disordered. Residues R815 to F831 are compositionally biased toward basic and acidic residues. The span at R846–R859 shows a compositional bias: polar residues.

It belongs to the adenylyl cyclase class-4/guanylyl cyclase family. In terms of assembly, heterotetramer of two alpha and two beta subunits.

The protein resides in the cell projection. It localises to the cilium. The protein localises to the flagellum. This Euglena gracilis protein is Photoactivated adenylate cyclase subunit beta-like protein FB.